Here is a 190-residue protein sequence, read N- to C-terminus: Holliday junction branch migration complex subunit RuvA (190 aa).

A domain I region spans residues 1–65 (MIGNLRGIVD…ENVTQLYGFI (65 aa)). Residues 66 to 143 (SKEEQQCLRL…KLEINNNHFH (78 aa)) are domain II. Residues 144-147 (SISE) are flexible linker. A domain III region spans residues 147–190 (EDALSALINLGYERTKAYDTIKKIEDESPNLDTKDIIRMALKTI).

The protein belongs to the RuvA family. As to quaternary structure, homotetramer. Forms an RuvA(8)-RuvB(12)-Holliday junction (HJ) complex. HJ DNA is sandwiched between 2 RuvA tetramers; dsDNA enters through RuvA and exits via RuvB. An RuvB hexamer assembles on each DNA strand where it exits the tetramer. Each RuvB hexamer is contacted by two RuvA subunits (via domain III) on 2 adjacent RuvB subunits; this complex drives branch migration. In the full resolvosome a probable DNA-RuvA(4)-RuvB(12)-RuvC(2) complex forms which resolves the HJ.

The protein resides in the cytoplasm. The RuvA-RuvB-RuvC complex processes Holliday junction (HJ) DNA during genetic recombination and DNA repair, while the RuvA-RuvB complex plays an important role in the rescue of blocked DNA replication forks via replication fork reversal (RFR). RuvA specifically binds to HJ cruciform DNA, conferring on it an open structure. The RuvB hexamer acts as an ATP-dependent pump, pulling dsDNA into and through the RuvAB complex. HJ branch migration allows RuvC to scan DNA until it finds its consensus sequence, where it cleaves and resolves the cruciform DNA. This chain is Holliday junction branch migration complex subunit RuvA, found in Wolbachia pipientis subsp. Culex pipiens (strain wPip).